Here is a 284-residue protein sequence, read N- to C-terminus: MTDRYPSPRALLDRYDLRAKKSWGQNFLGEEAVLDDIARLAAPRAGDPVLELGAGLGHLTARLLARGARVVAVERDRDMARVLRGELGDRITLLEADAARLDHAALAARFGAPAAAGEGARLAVVGNLPYHLTSPILFSILDQVAHVSRAVFLLQREVAERLAAPPASRDWGLLSVLLQREAEVSVERIVPPGAFWPPPKVESAVLCALFRPPADAVGDPARFRRLVKAGFGLRRKTLRNALGSAKLAEPARLEAAFAAAGVDPGRRGETLTLAEWAALDRALG.

S-adenosyl-L-methionine contacts are provided by asparagine 26, leucine 28, glycine 53, glutamate 74, aspartate 97, and asparagine 127.

It belongs to the class I-like SAM-binding methyltransferase superfamily. rRNA adenine N(6)-methyltransferase family. RsmA subfamily.

The protein localises to the cytoplasm. The catalysed reaction is adenosine(1518)/adenosine(1519) in 16S rRNA + 4 S-adenosyl-L-methionine = N(6)-dimethyladenosine(1518)/N(6)-dimethyladenosine(1519) in 16S rRNA + 4 S-adenosyl-L-homocysteine + 4 H(+). Its function is as follows. Specifically dimethylates two adjacent adenosines (A1518 and A1519) in the loop of a conserved hairpin near the 3'-end of 16S rRNA in the 30S particle. May play a critical role in biogenesis of 30S subunits. This is Ribosomal RNA small subunit methyltransferase A from Anaeromyxobacter dehalogenans (strain 2CP-C).